Consider the following 185-residue polypeptide: Alkyl hydroperoxide reductase AhpD (185 aa).

The Proton donor role is filled by cysteine 132. An intrachain disulfide couples cysteine 132 to cysteine 135. Cysteine 135 serves as the catalytic Cysteine sulfenic acid (-SOH) intermediate.

It belongs to the AhpD family.

The catalysed reaction is N(6)-[(R)-dihydrolipoyl]-L-lysyl-[lipoyl-carrier protein] + a hydroperoxide = N(6)-[(R)-lipoyl]-L-lysyl-[lipoyl-carrier protein] + an alcohol + H2O. In terms of biological role, antioxidant protein with alkyl hydroperoxidase activity. Required for the reduction of the AhpC active site cysteine residues and for the regeneration of the AhpC enzyme activity. This Anaeromyxobacter sp. (strain Fw109-5) protein is Alkyl hydroperoxide reductase AhpD.